The following is a 102-amino-acid chain: Redox- and pH-responsive transcriptional regulator WhiB3 (102 aa).

The 4Fe-4S Wbl-type domain occupies 22-86 (LCRGMDSSMF…GGLSESERDL (65 aa)). [4Fe-4S] cluster is bound by residues cysteine 23, cysteine 53, cysteine 56, and cysteine 62.

It belongs to the WhiB family. In terms of assembly, homodimer. Interacts with the C-terminal 54 residues of sigma factor SigA (RpoV). [4Fe-4S] cluster serves as cofactor. In terms of processing, the 4Fe-4S cluster interacts with NO, forming a protein-bound dinitrosyliron dithiol complex. Post-translationally, the 4Fe-4S cluster interacts with O(2), leading to its degradation. Cluster loss takes about 2 hours. Once in the apo-form the cysteines oxidize to form 2 intramolecular disulfide bonds.

The protein resides in the cytoplasm. Its function is as follows. A redox-sensitive transcriptional regulator. Maintains intracellular redox homeostasis by regulating catabolic metabolism and polyketide biosynthesis. Regulates expression of the redox buffer ergothioneine (ERG) in a carbon-source-dependent manner; loss of ERG or mycothiol (MSH, the other major redox buffer in this bacteria) leads to respiratory alterations and bioenergetic deficiencies that negatively impact virulence. In response to low external pH (like that found in host macrophage phagosomes) alters endogenous gene expression leading to acid resistance; MSH and WhiB3 are probably part of a regulatory circuit that mediates gene expression upon acid stress. Regulates pathogenic lipid synthesis, coordinating proprionate flux (and other host-derived fatty acid oxidation intermediates) into methyl-branched fatty acids (polyacyltrehalose, phthiocerol dimycocerosates, sulfolipids) and the storage lipid triacylglycerol, functioning as reductive sink. During intracellular growth M.tuberculosis uses host fatty acids as an energy source, generating large quantities of proprionate and NADH/NADPH, which are toxic and highly reducing respectively. WhiB3 is thought to help dissipate proprionate and NADH/NADPH by switching to the in vivo carbon source and via lipid anabolism. Responds to NO and O(2). Regulates expression of genes encoding modular polyketide synthases such as pks2, pks3 and fbpA. The oxidized apo-form of WhiB3 binds DNA (with 2 intramolecular disulfide bonds); holo-WhiB3 (with the 4Fe-4S cluster) binds DNA considerably less well. Discriminates poorly between specific and non-specific DNA-binding. Plays a role in virulence and nutritional stress. In its apo-form can act as a protein disulfide reductase. Functionally, may respond to mycothiol (MSH) redox potential (E-MSH) which decreases at pH 4.5 for up to 72 hours, indicative of cellular reductive stress; deletion of whiB3 leads to a lesser E-MSH at 72 hours, indicative of cellular oxidative stress. Probably via its effects on production of polyketide lipids, regulates host gene expression, leading to blockage of phagosome maturation. Equilibration of extra- and intracytoplasmic pH kills bacteria. The sequence is that of Redox- and pH-responsive transcriptional regulator WhiB3 (whiB3) from Mycobacterium tuberculosis (strain ATCC 25618 / H37Rv).